Here is a 225-residue protein sequence, read N- to C-terminus: MRANLIEIFESIQGEGFYIGVRQLFVRFAGCNLNCYYCDTPKTSENCLDLTANRTLKNPVSAEYVQGRIDSSKVHSVCFTGGEPMLQAEFIASLSKTHPFYLESNMTLPEKAKKLKFCDYVAGDLKVREAGLKNYDEVFQKTVKCFKVLRNTRRRKTFCKIVLPDKFDADEVLNSAYEIKNYVFGFVLQPVFGSRVEKILKLQKRMIDFADTRVIPQVHKYLGVR.

Substrate-binding positions include 12–14 and R27; that span reads IQG. The 208-residue stretch at 18 to 225 folds into the Radical SAM core domain; the sequence is YIGVRQLFVR…PQVHKYLGVR (208 aa). C31, C35, and C38 together coordinate [4Fe-4S] cluster. Mg(2+) is bound at residue T40. Position 80 (T80) interacts with substrate. Residue G82 participates in S-adenosyl-L-methionine binding.

Belongs to the radical SAM superfamily. 7-carboxy-7-deazaguanine synthase family. Homodimer. [4Fe-4S] cluster serves as cofactor. The cofactor is S-adenosyl-L-methionine. Mg(2+) is required as a cofactor.

It catalyses the reaction 6-carboxy-5,6,7,8-tetrahydropterin + H(+) = 7-carboxy-7-deazaguanine + NH4(+). It functions in the pathway purine metabolism; 7-cyano-7-deazaguanine biosynthesis. In terms of biological role, catalyzes the complex heterocyclic radical-mediated conversion of 6-carboxy-5,6,7,8-tetrahydropterin (CPH4) to 7-carboxy-7-deazaguanine (CDG), a step common to the biosynthetic pathways of all 7-deazapurine-containing compounds. The sequence is that of 7-carboxy-7-deazaguanine synthase from Archaeoglobus fulgidus (strain ATCC 49558 / DSM 4304 / JCM 9628 / NBRC 100126 / VC-16).